The chain runs to 248 residues: Protein PIMREG (248 aa).

Positions 1–10 (MASRWQNMGT) are enriched in polar residues. The tract at residues 1-32 (MASRWQNMGTSVRRRSLQHQEQLEDSKELQPV) is disordered. Ser-11 and Ser-16 each carry phosphoserine. Short sequence motifs (D-box) lie at residues 14 to 17 (RRSL) and 53 to 56 (RLPL). The disordered stretch occupies residues 117-205 (KARRRKRGAQ…PSESDSDLEP (89 aa)). A Phosphoserine modification is found at Ser-129. Residue Ser-131 is modified to Phosphoserine; by UHMK1; in vitro. Composition is skewed to polar residues over residues 132 to 143 (PTHSLSQKSTRL) and 186 to 198 (PYSSTEPLCSPSE). Phosphoserine is present on residues Ser-199 and Ser-201.

In terms of assembly, isoform 1 and isoform 2 interact with PICALM; this interaction may target PICALM to the nucleus. During mitosis, associates with HDAC2 and MTA2 subunits of the chromatin-remodeling NuRD complex; this association is strongest at prometaphase and decreases as the cell progresses through metaphase and anaphase. Ubiquitinated by the anaphase-promoting complex/cyclosome (APC/C) complex in the presence of FZR1, leading to its degradation by the proteasome during mitotic exit. However, degradation is not essential for normal mitotic progression within a single cell cycle. Expressed in thymus (at protein level). Detected in spleen, colon, ovary and small intestines.

Its subcellular location is the nucleus. It is found in the nucleolus. Its function is as follows. During mitosis, may play a role in the control of metaphase-to-anaphase transition. This is Protein PIMREG from Homo sapiens (Human).